The sequence spans 183 residues: Interleukin-24 (183 aa).

An N-terminal signal peptide occupies residues 1–28 (MQTSLRQQILPGLSLILLVLNQVPELQG). A disulfide bridge links Cys-36 with Cys-83. Asn-76 is a glycosylation site (N-linked (GlcNAc...) asparagine). Lys-99 is covalently cross-linked (Glycyl lysine isopeptide (Lys-Gly) (interchain with G-Cter in ubiquitin)).

The protein belongs to the IL-10 family. Post-translationally, glycosylated. Ubiquitination at Lys-99 promotes proteasomal degradation.

The protein localises to the secreted. Functionally, multifunctional cytokine mainly produced by T-cells that plays a regulatory role in immune response, tissue homeostasis, host defense, and oncogenesis. Possesses antiviral functions and induces the type I interferon response during influenza infection. Signals through two receptor complexes IL20RA/IL20RB or IL20RB/IL22RA1. In turn, stimulates the JAK1-STAT3 and MAPK pathways and promotes the secretion of pro-inflammatory mediators including IL8 and MMP1. Intracellularly, maintains endoplasmic reticulum homeostasis by restricting the eIF2alpha-CHOP pathway-mediated stress signal. In addition, acts as a quality control mechanism for the ubiquitin proteasome system by alerting the cell to proteasome dysfunction through activation of PKR/EIF2AK2. This chain is Interleukin-24 (Il24), found in Rattus norvegicus (Rat).